Reading from the N-terminus, the 564-residue chain is Eukaryotic translation initiation factor 3 subunit L (564 aa).

Ser2 carries the post-translational modification N-acetylserine. A PCI domain is found at 331-537; that stretch reads DAIRVFANIL…IHIADTKVAR (207 aa). Residues Lys465 and Lys549 each carry the N6-acetyllysine modification.

The protein belongs to the eIF-3 subunit L family. Component of the eukaryotic translation initiation factor 3 (eIF-3) complex, which is composed of 13 subunits: EIF3A, EIF3B, EIF3C, EIF3D, EIF3E, EIF3F, EIF3G, EIF3H, EIF3I, EIF3J, EIF3K, EIF3L and EIF3M. The eIF-3 complex appears to include 3 stable modules: module A is composed of EIF3A, EIF3B, EIF3G and EIF3I; module B is composed of EIF3F, EIF3H, and EIF3M; and module C is composed of EIF3C, EIF3D, EIF3E, EIF3K and EIF3L. EIF3C of module C binds EIF3B of module A and EIF3H of module B, thereby linking the three modules. EIF3J is a labile subunit that binds to the eIF-3 complex via EIF3B. The eIF-3 complex interacts with RPS6KB1 under conditions of nutrient depletion. Mitogenic stimulation leads to binding and activation of a complex composed of MTOR and RPTOR, leading to phosphorylation and release of RPS6KB1 and binding of EIF4B to eIF-3. Interacts with RRN3.

It is found in the cytoplasm. Its function is as follows. Component of the eukaryotic translation initiation factor 3 (eIF-3) complex, which is required for several steps in the initiation of protein synthesis. The eIF-3 complex associates with the 40S ribosome and facilitates the recruitment of eIF-1, eIF-1A, eIF-2:GTP:methionyl-tRNAi and eIF-5 to form the 43S pre-initiation complex (43S PIC). The eIF-3 complex stimulates mRNA recruitment to the 43S PIC and scanning of the mRNA for AUG recognition. The eIF-3 complex is also required for disassembly and recycling of post-termination ribosomal complexes and subsequently prevents premature joining of the 40S and 60S ribosomal subunits prior to initiation. The eIF-3 complex specifically targets and initiates translation of a subset of mRNAs involved in cell proliferation, including cell cycling, differentiation and apoptosis, and uses different modes of RNA stem-loop binding to exert either translational activation or repression. This Bos taurus (Bovine) protein is Eukaryotic translation initiation factor 3 subunit L.